The primary structure comprises 157 residues: Phosphomannomutase (157 aa).

Serine 98 functions as the Phosphoserine intermediate in the catalytic mechanism. Serine 98 is a Mg(2+) binding site.

It belongs to the phosphohexose mutase family. Mg(2+) serves as cofactor.

The catalysed reaction is alpha-D-mannose 1-phosphate = D-mannose 6-phosphate. Its pathway is nucleotide-sugar biosynthesis; GDP-alpha-D-mannose biosynthesis; alpha-D-mannose 1-phosphate from D-fructose 6-phosphate: step 2/2. It functions in the pathway capsule biogenesis; capsule polysaccharide biosynthesis. Its function is as follows. Involved in the biosynthesis of the K2 capsular polysaccharide biosynthesis. This Klebsiella pneumoniae protein is Phosphomannomutase (manB).